The following is a 616-amino-acid chain: MCGIIGYSGPRPAAEVLLKGLERLEYRGYDSAGIAVVTDKAYIESVKKSGKLNVLKTCLERRTTPIVGSTGIGHTRWATHGEPSDRNAHPHMDTEQSLAIVHNGIIENSDVLKRELLASGKSFTSETDTEVVAHLLSDAFKKTQDLVQAFVEVTQRLEGAFAVVAIHKDQPNTIVAAKNNSPLLLGFGQGENFLASDIAAFAEYTQRVANIDQERIVALSGDSVYITDFAGHPVDYEVHTVSWHPASVDSSGWSSFMLKEIFEEPQAVENTLKGRTEDGTVILPECDHIRDDLLAIDRVVLVGCGTAAYAAMTASYSIEAWAGLPVSVELSHEFRYREPVLNSKTLAVFISQSGETMDSLMAVRYARQAGVKTISVCNVMDSSIPKESHAVIYTKAGPEVAVASTKSFVCQIVVLYLLALYLGQLRGFRSIFPRQKAVCELNRLPVKLKQVLEIYESVRQLAHWMSDSRSILFLGRHAGYPIALEAALKLKELAYIHAEGFAAGELKHGPIALIEPGQPVFVIVPSPVGSPILHAKVISNIREIKSRGARIIAIAAEGDSAVLPHADSVLRIPLTRYSFEPLLSIVPLQIFALELAADKGFDVDRPRNLAKSVTVE.

The active-site Nucleophile; for GATase activity is the C2. The region spanning 2-222 (CGIIGYSGPR…QERIVALSGD (221 aa)) is the Glutamine amidotransferase type-2 domain. The tract at residues 70-89 (TGIGHTRWATHGEPSDRNAH) is disordered. SIS domains lie at 289-428 (IRDD…LRGF) and 461-606 (LAHW…VDRP). The For Fru-6P isomerization activity role is filled by K611.

Homodimer.

Its subcellular location is the cytoplasm. It catalyses the reaction D-fructose 6-phosphate + L-glutamine = D-glucosamine 6-phosphate + L-glutamate. Functionally, catalyzes the first step in hexosamine metabolism, converting fructose-6P into glucosamine-6P using glutamine as a nitrogen source. The polypeptide is Glutamine--fructose-6-phosphate aminotransferase [isomerizing] (Tropheryma whipplei (strain TW08/27) (Whipple's bacillus)).